The chain runs to 517 residues: Meiosis-specific transcription factor mei4 (517 aa).

Positions Lys-81–Arg-172 form a DNA-binding region, fork-head. Residues Leu-170–Pro-278 form a disordered region. Low complexity predominate over residues Asn-209–Asn-223. Positions Asn-230–Ile-246 are enriched in polar residues. Over residues Ser-254–Asn-270 the composition is skewed to low complexity.

The protein resides in the nucleus. Its function is as follows. Functions as a meiosis-specific transcription factor. Binds to the 5'-GTAAAYA-3' consensus sequence of the promoter of the spo6 gene. The chain is Meiosis-specific transcription factor mei4 (mei4) from Schizosaccharomyces pombe (strain 972 / ATCC 24843) (Fission yeast).